Reading from the N-terminus, the 293-residue chain is Large ribosomal subunit protein uL2c (293 aa).

Residues 224–245 (VMNPVDHPHGGGEGKSPIGRAR) form a disordered region.

This sequence belongs to the universal ribosomal protein uL2 family. Part of the 50S ribosomal subunit.

It is found in the plastid. Its subcellular location is the chloroplast. This Pyropia yezoensis (Susabi-nori) protein is Large ribosomal subunit protein uL2c (rpl2).